We begin with the raw amino-acid sequence, 202 residues long: Recombination protein RecR (202 aa).

A C4-type zinc finger spans residues 61-76; that stretch reads CARCNSFTEDEVCATC. In terms of domain architecture, Toprim spans 84–179; sequence GLLCIVETPA…KVTRLARGVP (96 aa).

Belongs to the RecR family.

Functionally, may play a role in DNA repair. It seems to be involved in an RecBC-independent recombinational process of DNA repair. It may act with RecF and RecO. This Bordetella pertussis (strain Tohama I / ATCC BAA-589 / NCTC 13251) protein is Recombination protein RecR.